A 253-amino-acid polypeptide reads, in one-letter code: MDMALPEFSMRQLLEAGVHYGHQTARWNPKMAEFIYGDRNGIHIVDLTQTVPMLDQALKVVRDTVAKGGRILFVGTKRQAQKPIAEAAEKCAQHYMNHRWLGGTLTNWKTVSQSIQRLKQLDEVLATGAEGLTKKERLNMEREQQKLQASLGGIREMGGTPDLLFIIDVGKEDLAIAEAQKLGIPVVAVVDTNNSPKGVDYVIPGNDDAARAIALYCDLVSRAALDGMSAQMGAAGIDLGALDVAPEEETLEA.

This sequence belongs to the universal ribosomal protein uS2 family.

This chain is Small ribosomal subunit protein uS2, found in Cereibacter sphaeroides (strain ATCC 17023 / DSM 158 / JCM 6121 / CCUG 31486 / LMG 2827 / NBRC 12203 / NCIMB 8253 / ATH 2.4.1.) (Rhodobacter sphaeroides).